The chain runs to 346 residues: LRP2-binding protein (346 aa).

The TPR repeat unit spans residues 58–91; the sequence is AMAYFLRGQLYFEEGWYEEALAQFEEIQEKDHQA. Sel1-like repeat units follow at residues 92–124, 132–167, 172–205, 206–241, 242–276, and 296–331; these read IYQL…DSSC, FAAA…DNGN, VKAQ…GNGS, LESQ…ERGN, VYAQ…EVHD, and AMAA…RLNP.

Interacts with LRP2.

The protein localises to the cytoplasm. Functionally, may act as an adapter that regulates LRP2 function. This chain is LRP2-binding protein (Lrp2bp), found in Mus musculus (Mouse).